A 329-amino-acid polypeptide reads, in one-letter code: Beta-ketoacyl-[acyl-carrier-protein] synthase III (329 aa).

Active-site residues include Cys113 and His255. The segment at 256–260 (QANQR) is ACP-binding. The active site involves Asn285.

Belongs to the thiolase-like superfamily. FabH family. In terms of assembly, homodimer.

Its subcellular location is the cytoplasm. The enzyme catalyses malonyl-[ACP] + acetyl-CoA + H(+) = 3-oxobutanoyl-[ACP] + CO2 + CoA. The protein operates within lipid metabolism; fatty acid biosynthesis. Its function is as follows. Catalyzes the condensation reaction of fatty acid synthesis by the addition to an acyl acceptor of two carbons from malonyl-ACP. Catalyzes the first condensation reaction which initiates fatty acid synthesis and may therefore play a role in governing the total rate of fatty acid production. Possesses both acetoacetyl-ACP synthase and acetyl transacylase activities. Its substrate specificity determines the biosynthesis of branched-chain and/or straight-chain of fatty acids. This Chlorobium chlorochromatii (strain CaD3) protein is Beta-ketoacyl-[acyl-carrier-protein] synthase III.